A 215-amino-acid chain; its full sequence is Golgi-associated RAB2 interactor protein 5A (215 aa).

Disordered stretches follow at residues 1-20 (MKRG…AGPG) and 174-215 (QDYS…LWGL). The segment covering 178-191 (ALEDDEDDDEDEDR) has biased composition (acidic residues).

The protein belongs to the GARIN family. In terms of assembly, interacts (via N-terminus) with RAB2B (in GTP-bound form).

It is found in the golgi apparatus. Its function is as follows. RAB2B effector protein which promotes cytosolic DNA-induced innate immune responses. Regulates IFN responses against DNA viruses by regulating the CGAS-STING signaling axis. The chain is Golgi-associated RAB2 interactor protein 5A (GARIN5A) from Bos taurus (Bovine).